A 371-amino-acid polypeptide reads, in one-letter code: 4-hydroxy-3-methylbut-2-en-1-yl diphosphate synthase (flavodoxin) (371 aa).

4 residues coordinate [4Fe-4S] cluster: C270, C273, C305, and E312.

The protein belongs to the IspG family. The cofactor is [4Fe-4S] cluster.

The enzyme catalyses (2E)-4-hydroxy-3-methylbut-2-enyl diphosphate + oxidized [flavodoxin] + H2O + 2 H(+) = 2-C-methyl-D-erythritol 2,4-cyclic diphosphate + reduced [flavodoxin]. It functions in the pathway isoprenoid biosynthesis; isopentenyl diphosphate biosynthesis via DXP pathway; isopentenyl diphosphate from 1-deoxy-D-xylulose 5-phosphate: step 5/6. Its function is as follows. Converts 2C-methyl-D-erythritol 2,4-cyclodiphosphate (ME-2,4cPP) into 1-hydroxy-2-methyl-2-(E)-butenyl 4-diphosphate. The protein is 4-hydroxy-3-methylbut-2-en-1-yl diphosphate synthase (flavodoxin) of Shewanella frigidimarina (strain NCIMB 400).